The following is a 152-amino-acid chain: Prostaglandin E synthase (152 aa).

Residues 1–12 (MPAHSLAMSSPA) are Lumenal-facing. Residues 13–41 (LPAFLLCSTLLVIKMYVVAIITGQVRLRK) traverse the membrane as a helical segment. Arginine 38 is a glutathione binding site. Topologically, residues 42–60 (KAFANPEDALRHGGPQYCR) are cytoplasmic. The chain crosses the membrane as a helical span at residues 61–90 (SDPDVERCLRAHRNDMETIYPFLFLGFVYS). Residue 73–77 (RNDME) participates in glutathione binding. Residues 91 to 95 (FLGPN) are Lumenal-facing. A helical membrane pass occupies residues 96 to 119 (PFVAWMHFLVFLLGRVVHTVAYLG). Residues histidine 113 and tyrosine 117 each coordinate glutathione. Residues 120 to 123 (KLRA) are Cytoplasmic-facing. The helical transmembrane segment at 124–152 (PIRSVTYTLAQLPCASMALQILWEAARHL) threads the bilayer. Position 126 to 130 (126 to 130 (RSVTY)) interacts with glutathione.

Belongs to the MAPEG family. As to quaternary structure, homotrimer. Requires glutathione as cofactor.

The protein resides in the membrane. Its subcellular location is the cytoplasm. The protein localises to the perinuclear region. It catalyses the reaction prostaglandin H2 = prostaglandin E2. It carries out the reaction 2-glyceryl-prostaglandin H2 = 2-glyceryl-prostaglandin E2. The enzyme catalyses prostaglandin G2 = (15S)-15-hydroperoxy-prostaglandin E2. The catalysed reaction is 1-chloro-2,4-dinitrobenzene + glutathione = 2,4-dinitrophenyl-S-glutathione + chloride + H(+). It catalyses the reaction (5S)-hydroperoxy-(6E,8Z,11Z,14Z)-eicosatetraenoate + 2 glutathione = (5S)-hydroxy-(6E,8Z,11Z,14Z)-eicosatetraenoate + glutathione disulfide + H2O. It functions in the pathway lipid metabolism; prostaglandin biosynthesis. In terms of biological role, terminal enzyme of the cyclooxygenase (COX)-2-mediated prostaglandin E2 (PGE2) biosynthetic pathway. Catalyzes the glutathione-dependent oxidoreduction of prostaglandin endoperoxide H2 (PGH2) to prostaglandin E2 (PGE2) in response to inflammatory stimuli. Plays a key role in inflammation response, fever and pain. Also catalyzes the oxidoreduction of endocannabinoids into prostaglandin glycerol esters and PGG2 into 15-hydroperoxy-PGE2. In addition, displays low glutathione transferase and glutathione-dependent peroxidase activities, toward 1-chloro-2,4-dinitrobenzene and 5-hydroperoxyicosatetraenoic acid (5-HPETE), respectively. This chain is Prostaglandin E synthase (PTGES), found in Macaca fascicularis (Crab-eating macaque).